We begin with the raw amino-acid sequence, 252 residues long: Neurexophilin-3 (252 aa).

An N-terminal signal peptide occupies residues 1 to 22; the sequence is MQLTRCCFVFLVQGSLYLVICG. The tract at residues 23-75 is II; sequence QDDGPPGSEDPEHDDHEGQPRPRVPRKRGHISPKSRPLANSTLLGLLAPPGEV. The disordered stretch occupies residues 27 to 59; it reads PPGSEDPEHDDHEGQPRPRVPRKRGHISPKSRP. Positions 45–55 are enriched in basic residues; it reads RVPRKRGHISP. N-linked (GlcNAc...) asparagine glycosylation is found at Asn62, Asn127, Asn137, and Asn143. The tract at residues 76–157 is III; the sequence is WGVLGQPPNR…LVPPSKAVEF (82 aa). Positions 158-166 are IV (linker domain); it reads HQEQQIFIE. The v (Cys-rich) stretch occupies residues 167–252; it reads AKASKIFNCR…HSDTPYYPSG (86 aa).

This sequence belongs to the neurexophilin family. Post-translationally, may be proteolytically processed at the boundary between the N-terminal non-conserved and the central conserved domain in neuron-like cells. Highest level in brain, present also in lung, kidney and testis.

It localises to the secreted. In terms of biological role, may be signaling molecules that resemble neuropeptides. Ligand for alpha-neurexins. This Mus musculus (Mouse) protein is Neurexophilin-3 (Nxph3).